The sequence spans 192 residues: Thiosulfate reductase electron transfer subunit PhsB (192 aa).

3 consecutive 4Fe-4S ferredoxin-type domains span residues 8-36 (YVMLHDEKRCIGCQACTVACKVLNDVPEG), 55-86 (THFQFVRVSCQHCENAPCVSVCPTGASYRDEN), and 87-116 (GIVQVDKSRCIGCDYCVAACPFHVRYLNPQ). Residues Cys-17, Cys-20, Cys-23, Cys-27, Cys-64, Cys-67, Cys-72, Cys-76, Cys-96, Cys-99, Cys-102, Cys-106, Cys-123, Cys-126, Cys-139, and Cys-143 each contribute to the [4Fe-4S] cluster site.

In terms of assembly, composed of three subunits: PhsA, PhsB and PhsC. [4Fe-4S] cluster serves as cofactor.

The protein resides in the cell inner membrane. In terms of biological role, component of the PhsABC thiosulfate reductase that catalyzes the reduction of thiosulfate to sulfite and hydrogen sulfide, with menaquinol as the sole electron donor. Proton motive force (PMF) is required to drive transmembrane electron transfer within the reductase. The PhsB subunit transfers electrons between PhsC and PhsA. The protein is Thiosulfate reductase electron transfer subunit PhsB (phsB) of Salmonella typhi.